The following is a 160-amino-acid chain: Putative pre-16S rRNA nuclease (160 aa).

This sequence belongs to the YqgF nuclease family.

The protein localises to the cytoplasm. Could be a nuclease involved in processing of the 5'-end of pre-16S rRNA. This Cereibacter sphaeroides (strain ATCC 17029 / ATH 2.4.9) (Rhodobacter sphaeroides) protein is Putative pre-16S rRNA nuclease.